We begin with the raw amino-acid sequence, 21 residues long: Pollen allergen Ole e 7 (21 aa).

The polypeptide is Pollen allergen Ole e 7 (Olea europaea (Common olive)).